The primary structure comprises 172 residues: Large ribosomal subunit protein uL10 (172 aa).

It belongs to the universal ribosomal protein uL10 family. In terms of assembly, part of the ribosomal stalk of the 50S ribosomal subunit. The N-terminus interacts with L11 and the large rRNA to form the base of the stalk. The C-terminus forms an elongated spine to which L12 dimers bind in a sequential fashion forming a multimeric L10(L12)X complex.

Forms part of the ribosomal stalk, playing a central role in the interaction of the ribosome with GTP-bound translation factors. The sequence is that of Large ribosomal subunit protein uL10 from Ruegeria sp. (strain TM1040) (Silicibacter sp.).